The chain runs to 69 residues: DNA gyrase inhibitor YacG (69 aa).

Zn(2+) is bound by residues C7, C10, C26, and C30.

This sequence belongs to the DNA gyrase inhibitor YacG family. As to quaternary structure, interacts with GyrB. Zn(2+) is required as a cofactor.

Functionally, inhibits all the catalytic activities of DNA gyrase by preventing its interaction with DNA. Acts by binding directly to the C-terminal domain of GyrB, which probably disrupts DNA binding by the gyrase. In Shewanella putrefaciens (strain CN-32 / ATCC BAA-453), this protein is DNA gyrase inhibitor YacG.